The primary structure comprises 606 residues: Transcription factor glial cells missing 2 (606 aa).

Over residues 20–37 (DHSQLTQFVQPQSQSTHS) the composition is skewed to polar residues. Disordered stretches follow at residues 20 to 65 (DHSQ…KGKR), 475 to 501 (EMQQ…HHYY), and 561 to 606 (TAPT…SVTH). The span at 44-61 (PGQQQAGGSMTMPSSSTG) shows a compositional bias: low complexity. The segment at residues 65–224 (REWDINDAIV…KNSSVSKRAF (160 aa)) is a DNA-binding region (GCM). The segment covering 490–501 (FGGNQTAGHHYY) has biased composition (polar residues). A compositionally biased stretch (pro residues) spans 569-580 (PGHPPPPPPPPT). Over residues 583-593 (YHHHHHHHLHH) the composition is skewed to basic residues. Low complexity predominate over residues 594-606 (PAAATGLAPSVTH).

In terms of tissue distribution, expressed in glial lineages within embryonic procephalic mesoderm. Expression is highest in hemocyte primordia and longitudinal and nerve root ganglia.

It localises to the nucleus. Transcription factor with a minor role promoting glial cell differentiation and a more significant role in hematocyte differentiation. Gcm2, together with gcm, is required for the proliferation of plasmatocyte precursors, the expression of Croquemort protein, and the ability of plasmatocytes to convert into macrophages. This is Transcription factor glial cells missing 2 (gcm2) from Drosophila melanogaster (Fruit fly).